Here is a 306-residue protein sequence, read N- to C-terminus: Glutathione transport system permease protein GsiC (306 aa).

Over 1-8 (MLNYVLKR) the chain is Cytoplasmic. A helical membrane pass occupies residues 9–29 (LLGLIPTLLIVAVLVFLFVHL). At 30–102 (LPGDPARLIA…SRFLPTLWLT (73 aa)) the chain is on the periplasmic side. The 198-residue stretch at 95 to 292 (FLPTLWLTIT…LEFILINLVV (198 aa)) folds into the ABC transmembrane type-1 domain. Residues 103–123 (ITSMIWAVLFGMAIGIAAAVW) form a helical membrane-spanning segment. The Cytoplasmic segment spans residues 124-134 (RNRWPDRLGMT). The helical transmembrane segment at 135–155 (LAVTGISFPAFALGMLLMQIF) threads the bilayer. The Periplasmic portion of the chain corresponds to 156-168 (SVDLGWLPTVGAD). A helical membrane pass occupies residues 169-189 (SWQHYILPSLTLGAAVASVMA). The Cytoplasmic segment spans residues 190-228 (RFTRSSFVDVLSEDYMRTARAKGVSETWVVLKHGLRNAM). A helical transmembrane segment spans residues 229–249 (IPVVTMMGLQFGFLLGGSIVV). The Periplasmic portion of the chain corresponds to 250–278 (EKVFNWPGLGRLLVDSVDMRDYPVIQAEV). A helical transmembrane segment spans residues 279–299 (LLFSLEFILINLVVDVLYAAI). Topologically, residues 300-306 (NPAIRYK) are cytoplasmic.

Belongs to the binding-protein-dependent transport system permease family. The complex is composed of two ATP-binding proteins (GsiA), two transmembrane proteins (GsiC and GsiD) and a solute-binding protein (GsiB).

Its subcellular location is the cell inner membrane. Its function is as follows. Part of the ABC transporter complex GsiABCD involved in glutathione import. Probably responsible for the translocation of the substrate across the membrane. This Salmonella paratyphi A (strain ATCC 9150 / SARB42) protein is Glutathione transport system permease protein GsiC.